A 148-amino-acid chain; its full sequence is Glutamyl-tRNA(Gln) amidotransferase subunit C, mitochondrial (148 aa).

It belongs to the GatC family. Subunit of the heterotrimeric GatCAB amidotransferase (AdT) complex, composed of A, B and C subunits.

It is found in the mitochondrion. The catalysed reaction is L-glutamyl-tRNA(Gln) + L-glutamine + ATP + H2O = L-glutaminyl-tRNA(Gln) + L-glutamate + ADP + phosphate + H(+). Functionally, allows the formation of correctly charged Gln-tRNA(Gln) through the transamidation of misacylated Glu-tRNA(Gln) in the mitochondria. The reaction takes place in the presence of glutamine and ATP through an activated gamma-phospho-Glu-tRNA(Gln). This chain is Glutamyl-tRNA(Gln) amidotransferase subunit C, mitochondrial, found in Drosophila sechellia (Fruit fly).